Reading from the N-terminus, the 57-residue chain is UPF0434 protein Shal_2504 (57 aa).

This sequence belongs to the UPF0434 family.

This Shewanella halifaxensis (strain HAW-EB4) protein is UPF0434 protein Shal_2504.